We begin with the raw amino-acid sequence, 321 residues long: Protoheme IX farnesyltransferase (321 aa).

The next 10 membrane-spanning stretches (helical) occupy residues Val-28–His-48, Pro-49–Leu-69, Val-94–Leu-114, Ile-116–Ile-136, Ile-149–Gly-169, Phe-176–Gly-196, Ile-222–Ala-242, Gly-247–Val-267, Ala-277–Val-297, and Leu-300–Phe-320.

The protein belongs to the UbiA prenyltransferase family. Protoheme IX farnesyltransferase subfamily.

It localises to the cell inner membrane. The catalysed reaction is heme b + (2E,6E)-farnesyl diphosphate + H2O = Fe(II)-heme o + diphosphate. It functions in the pathway porphyrin-containing compound metabolism; heme O biosynthesis; heme O from protoheme: step 1/1. In terms of biological role, converts heme B (protoheme IX) to heme O by substitution of the vinyl group on carbon 2 of heme B porphyrin ring with a hydroxyethyl farnesyl side group. This chain is Protoheme IX farnesyltransferase, found in Beijerinckia indica subsp. indica (strain ATCC 9039 / DSM 1715 / NCIMB 8712).